Here is a 428-residue protein sequence, read N- to C-terminus: Putative aminotransferase MSMEG_6286/MSMEI_6121 (428 aa).

Residue G37 coordinates substrate. Pyridoxal 5'-phosphate contacts are provided by residues Y72, 102-105 (ASLE), N191, 222-225 (AYAV), and 256-258 (STS). K339 is covalently cross-linked (Isoglutamyl lysine isopeptide (Lys-Gln) (interchain with Q-Cter in protein Pup)).

The protein belongs to the class-I pyridoxal-phosphate-dependent aminotransferase family. Pyridoxal 5'-phosphate is required as a cofactor.

This chain is Putative aminotransferase MSMEG_6286/MSMEI_6121, found in Mycolicibacterium smegmatis (strain ATCC 700084 / mc(2)155) (Mycobacterium smegmatis).